The chain runs to 762 residues: Semaphorin-4A (762 aa).

A signal peptide spans 1 to 32 (MALPALGLDSWSFLGLFLFQLLLLFLPPATTA). Topologically, residues 33-684 (GREGQGPTPR…LAAPKSYWPH (652 aa)) are extracellular. In terms of domain architecture, Sema spans 37–495 (QGPTPRVKYH…FSGGIWKVPR (459 aa)). A disulfide bridge connects residues cysteine 114 and cysteine 125. 2 N-linked (GlcNAc...) asparagine glycosylation sites follow: asparagine 121 and asparagine 136. Disulfide bonds link cysteine 143/cysteine 152, cysteine 270/cysteine 380, and cysteine 294/cysteine 340. N-linked (GlcNAc...) asparagine glycosylation is found at asparagine 314 and asparagine 497. The PSI domain occupies 497–544 (NCSVYESCMDCVLARDPHCAWDPESQTCRLLPTPILKSWKQDMQQGNP). 2 cysteine pairs are disulfide-bonded: cysteine 498/cysteine 515 and cysteine 507/cysteine 524. The Ig-like C2-type domain maps to 574–632 (NSILELPCPQSSALASYHWSHGVEAIPEAPSTVYNGSLLLLLRDGAGGLYQCWATENDF). Asparagine 608 carries an N-linked (GlcNAc...) asparagine glycan. The helical transmembrane segment at 685 to 705 (FLTVTVLLALVLSGALVTFLV) threads the bilayer. Residues 706-762 (SPLGALRARGKVQGCGTLPSREKAPLSSEQCLQPSKEGRTSASDMDADNNLQGTEVA) are Cytoplasmic-facing. The segment at 722 to 762 (TLPSREKAPLSSEQCLQPSKEGRTSASDMDADNNLQGTEVA) is disordered.

Belongs to the semaphorin family. Interacts with PLXNB1, PLXNB2, PLXNB3, PLXND1 and TIMD2.

It localises to the cell membrane. Cell surface receptor for PLXNB1, PLXNB2, PLXNB3 and PLXND1 that plays an important role in cell-cell signaling. Regulates glutamatergic and GABAergic synapse development. Promotes the development of inhibitory synapses in a PLXNB1-dependent manner and promotes the development of excitatory synapses in a PLXNB2-dependent manner. Plays a role in priming antigen-specific T-cells, promotes differentiation of Th1 T-helper cells, and thereby contributes to adaptive immunity. Promotes phosphorylation of TIMD2. Inhibits angiogenesis. Promotes axon growth cone collapse. Inhibits axonal extension by providing local signals to specify territories inaccessible for growing axons. The chain is Semaphorin-4A (SEMA4A) from Bos taurus (Bovine).